The following is a 286-amino-acid chain: Bifunctional protein FolD (286 aa).

NADP(+) contacts are provided by residues 165 to 167 and Ser190; that span reads GRS.

Belongs to the tetrahydrofolate dehydrogenase/cyclohydrolase family. As to quaternary structure, homodimer.

It catalyses the reaction (6R)-5,10-methylene-5,6,7,8-tetrahydrofolate + NADP(+) = (6R)-5,10-methenyltetrahydrofolate + NADPH. The enzyme catalyses (6R)-5,10-methenyltetrahydrofolate + H2O = (6R)-10-formyltetrahydrofolate + H(+). It participates in one-carbon metabolism; tetrahydrofolate interconversion. Functionally, catalyzes the oxidation of 5,10-methylenetetrahydrofolate to 5,10-methenyltetrahydrofolate and then the hydrolysis of 5,10-methenyltetrahydrofolate to 10-formyltetrahydrofolate. The protein is Bifunctional protein FolD of Staphylococcus aureus (strain USA300).